Here is a 560-residue protein sequence, read N- to C-terminus: Chaperonin GroEL 2 (560 aa).

Residues 29–32 (TLGP), 86–90 (DGTTT), G413, 478–480 (NAA), and D494 each bind ATP.

This sequence belongs to the chaperonin (HSP60) family. In terms of assembly, forms a cylinder of 14 subunits composed of two heptameric rings stacked back-to-back. Interacts with the co-chaperonin GroES.

Its subcellular location is the cytoplasm. The enzyme catalyses ATP + H2O + a folded polypeptide = ADP + phosphate + an unfolded polypeptide.. Its function is as follows. Together with its co-chaperonin GroES, plays an essential role in assisting protein folding. The GroEL-GroES system forms a nano-cage that allows encapsulation of the non-native substrate proteins and provides a physical environment optimized to promote and accelerate protein folding. The chain is Chaperonin GroEL 2 from Nostoc sp. (strain PCC 7120 / SAG 25.82 / UTEX 2576).